We begin with the raw amino-acid sequence, 902 residues long: MSQSKEDKIRSILEAKNIKSNFQNKENLSEFNEKKASKRAEDLLDVYYNTLSTADMEFPYWYNREYRKSDGDIPVVRRAKALKAAFSHMTPNIIPGEKIVMQKTRHYRGSFPMPWVSESFFVAQGEQMREEAKKLASNTADELTKFGSGGGNVTESFGNVVSIAGKFGMRKEEVPVLVKMAKEWVGKSVEDLGFHYEKMMPDYDLKENLMSTLICMFDSGYTLPQGREVINYFYPLNYGLDGIIEMAKECKKAVAGNASGDGLIGMDRLYFYEAVIQVIEGLQTWILNYAKHAKYLESIETDLEAKKEYSDLVEILEHIAHKQPRTFREALQLTYTIHIASVNEDAISGMSIGRFGQILYPWYEQDIEKGLITKEEVIELLELYRIKITCIDCFASAGVNGGVLSGNTFNTLSIGGLKEDGSTGANELEELLLEASMRCRTPQPSLTMLYDEKLPEDFLMKAAECTKLGSGYPAWVNNSNGTTFMMKQFADEGMTVEEARAFALGGCLETSPGCWKQLTLNGKTYSIAGGAGQSAGSGVHFIANPKILELVLMNGKDHRMNIQVFEPHNKPLDTYEEVIEVFKDYYKQAINVLERANNIELDIWRKFDTSIINSLLKPDCLDKGQHIGNMGYRYNATLNVETCGTVTMVNSFAALKKLVYDDKAFTIEEMKDAILNNFGFKDALEVGNYSMADQVKVDKTGKYDAIYKACLDAPKYGNNDLYADNILKNYEVWLSKVCEEAQSLYAKKMYPCQISVSTHGPQGAATLATPDGRLSGTTYSDGSVSAYAGTDKNGVYALFESATIWDQAVVQNSQMNLKLHPTTIKGQQGTKKLLDLTRSYLRKGGFHIQYNVVDSETLKDAQKNPDNYRQLMVRVAGFTQYWCELGKPIQDEVIARTEYEGV.

Residues 38 to 774 enclose the PFL domain; the sequence is KRAEDLLDVY…ATLATPDGRL (737 aa). Residues serine 348 and cysteine 507 each coordinate 4-hydroxyphenylacetate. Cysteine 507 acts as the Cysteine radical intermediate in catalysis. The active-site Proton donor is glutamate 509. 4-hydroxyphenylacetate-binding residues include histidine 540 and glutamate 641. The 121-residue stretch at 782–902 folds into the Glycine radical domain; that stretch reads GSVSAYAGTD…VIARTEYEGV (121 aa). The residue at position 877 (glycine 877) is a Glycine radical.

Belongs to the glycyl radical enzyme (GRE) family. HPAD subfamily. Heterooctamer consisting of 4 large (HpdB) subunits and 4 small (HpdC) subunits, arranged as a tetramer of heterodimers. Also forms a catalytically inactive homodimer. Post-translationally, requires the activating protein CsdA to generate the key active site glycyl radical that is involved in catalysis. Phosphorylated on serine. Phosphorylation may trigger the formation of the active heterooctamers and thereby regulates enzyme activity.

It carries out the reaction 4-hydroxyphenylacetate + H(+) = 4-methylphenol + CO2. It catalyses the reaction 3,4-dihydroxyphenylacetate + H(+) = 4-methylcatechol + CO2. Functionally, glycyl radical subunit of the HPA decarboxylase that decarboxylates phenylacetates with a hydroxyl group in the p-position. Active toward 4-hydroxyphenylacetate and 3,4-dihydroxyphenylacetate, forming 4-methylphenol and 4-methylcatechol, respectively. Is likely involved in the catabolism of aromatic amino acids such as tyrosine fermentation. 4-methylphenol (p-cresol) formation provides metabolic toxicity, which allows an active suppression of other microbes and may provide growth advantages for the producers in highly competitive environments. The large subunit is the catalytic subunit that binds the substrate. The sequence is that of 4-hydroxyphenylacetate decarboxylase glycyl radical subunit from Clostridioides difficile (strain CD196) (Peptoclostridium difficile).